We begin with the raw amino-acid sequence, 523 residues long: Tryptamine 5-hydroxylase (523 aa).

Residues 5–25 (MASTMSLALLVLSAAYVLVAL) form a helical membrane-spanning segment. Cys-453 contributes to the heme binding site.

Belongs to the cytochrome P450 family. Requires heme as cofactor.

Its subcellular location is the endoplasmic reticulum membrane. The catalysed reaction is tryptamine + reduced [NADPH--hemoprotein reductase] + O2 = serotonin + oxidized [NADPH--hemoprotein reductase] + H2O + H(+). Functionally, involved in serotonin biosynthesis. Catalyzes the conversion of tryptamine to serotonin. Accumulation of serotonin may play a role in innate immunity. The protein is Tryptamine 5-hydroxylase of Oryza sativa subsp. japonica (Rice).